Reading from the N-terminus, the 357-residue chain is Ferrochelatase (357 aa).

Positions 193 and 272 each coordinate Fe cation.

Belongs to the ferrochelatase family.

The protein resides in the cytoplasm. The enzyme catalyses heme b + 2 H(+) = protoporphyrin IX + Fe(2+). Its pathway is porphyrin-containing compound metabolism; protoheme biosynthesis; protoheme from protoporphyrin-IX: step 1/1. In terms of biological role, catalyzes the ferrous insertion into protoporphyrin IX. The sequence is that of Ferrochelatase from Hyphomonas neptunium (strain ATCC 15444).